Consider the following 199-residue polypeptide: Charged multivesicular body protein 1b (199 aa).

2 coiled-coil regions span residues 10–48 (NLKF…MEVA) and 178–199 (TSVA…RDQV). A disordered region spans residues 167-199 (ELPQGQTGSVGTSVASAEQDELSQRLARLRDQV). Polar residues predominate over residues 170–182 (QGQTGSVGTSVAS). The short motif at 186–196 (DELSQRLARLR) is the MIT-interacting motif element.

It belongs to the SNF7 family. In terms of assembly, probable peripherally associated component of the endosomal sorting required for transport complex III (ESCRT-III).

It is found in the cytoplasm. It localises to the cytosol. Its subcellular location is the endosome. The protein localises to the late endosome membrane. Functionally, probable peripherally associated component of the endosomal sorting required for transport complex III (ESCRT-III) which is involved in multivesicular bodies (MVBs) formation and sorting of endosomal cargo proteins into MVBs. MVBs contain intraluminal vesicles (ILVs) that are generated by invagination and scission from the limiting membrane of the endosome and mostly are delivered to lysosomes enabling degradation of membrane proteins, such as stimulated growth factor receptors, lysosomal enzymes and lipids. In Gallus gallus (Chicken), this protein is Charged multivesicular body protein 1b (CHMP1B).